A 610-amino-acid polypeptide reads, in one-letter code: Glutamine--fructose-6-phosphate aminotransferase [isomerizing] (610 aa).

The active-site Nucleophile; for GATase activity is the cysteine 2. The 217-residue stretch at cysteine 2–arginine 218 folds into the Glutamine amidotransferase type-2 domain. 2 SIS domains span residues alanine 286 to arginine 426 and leucine 459 to proline 600. The For Fru-6P isomerization activity role is filled by lysine 605.

As to quaternary structure, homodimer.

Its subcellular location is the cytoplasm. The enzyme catalyses D-fructose 6-phosphate + L-glutamine = D-glucosamine 6-phosphate + L-glutamate. In terms of biological role, catalyzes the first step in hexosamine metabolism, converting fructose-6P into glucosamine-6P using glutamine as a nitrogen source. The chain is Glutamine--fructose-6-phosphate aminotransferase [isomerizing] from Aliivibrio fischeri (strain ATCC 700601 / ES114) (Vibrio fischeri).